Here is a 167-residue protein sequence, read N- to C-terminus: Large ribosomal subunit protein uL10 (167 aa).

Belongs to the universal ribosomal protein uL10 family. In terms of assembly, part of the ribosomal stalk of the 50S ribosomal subunit. The N-terminus interacts with L11 and the large rRNA to form the base of the stalk. The C-terminus forms an elongated spine to which L12 dimers bind in a sequential fashion forming a multimeric L10(L12)X complex.

In terms of biological role, forms part of the ribosomal stalk, playing a central role in the interaction of the ribosome with GTP-bound translation factors. This is Large ribosomal subunit protein uL10 from Dichelobacter nodosus (strain VCS1703A).